Here is a 261-residue protein sequence, read N- to C-terminus: Glucose 1-dehydrogenase 3 (261 aa).

11 to 35 (VITGGSTGLGRAMAVRFGQEEAKVV) contacts NAD(+). Ser145 lines the substrate pocket. The active-site Proton acceptor is the Tyr158.

It belongs to the short-chain dehydrogenases/reductases (SDR) family. In terms of assembly, homotetramer.

It catalyses the reaction D-glucose + NAD(+) = D-glucono-1,5-lactone + NADH + H(+). It carries out the reaction D-glucose + NADP(+) = D-glucono-1,5-lactone + NADPH + H(+). In Priestia megaterium (Bacillus megaterium), this protein is Glucose 1-dehydrogenase 3 (gdhIII).